The primary structure comprises 439 residues: Signal recognition particle 54 kDa protein (439 aa).

GTP is bound by residues 104 to 111 (GLQGSGKT), 184 to 188 (DTAGR), and 242 to 245 (SKLD).

The protein belongs to the GTP-binding SRP family. SRP54 subfamily. As to quaternary structure, part of the signal recognition particle protein translocation system, which is composed of SRP and FtsY. Archaeal SRP consists of a 7S RNA molecule of 300 nucleotides and two protein subunits: SRP54 and SRP19.

It is found in the cytoplasm. The catalysed reaction is GTP + H2O = GDP + phosphate + H(+). Involved in targeting and insertion of nascent membrane proteins into the cytoplasmic membrane. Binds to the hydrophobic signal sequence of the ribosome-nascent chain (RNC) as it emerges from the ribosomes. The SRP-RNC complex is then targeted to the cytoplasmic membrane where it interacts with the SRP receptor FtsY. In Methanococcoides burtonii (strain DSM 6242 / NBRC 107633 / OCM 468 / ACE-M), this protein is Signal recognition particle 54 kDa protein.